The following is a 90-amino-acid chain: Mitochondrial import inner membrane translocase subunit Tim8 A (90 aa).

The Twin CX3C motif signature appears at 36-59 (CWDKCMDKPGPKLDSRAEMCFVNC). 2 disulfide bridges follow: Cys-36/Cys-59 and Cys-40/Cys-55.

Belongs to the small Tim family. As to quaternary structure, heterohexamer; composed of 3 copies of TIMM8A and 3 copies of TIMM13, named soluble 70 kDa complex. Associates with the TIM22 complex, whose core is composed of TIMM22.

The protein localises to the mitochondrion inner membrane. Functionally, mitochondrial intermembrane chaperone that participates in the import and insertion of some multi-pass transmembrane proteins into the mitochondrial inner membrane. Also required for the transfer of beta-barrel precursors from the TOM complex to the sorting and assembly machinery (SAM complex) of the outer membrane. Acts as a chaperone-like protein that protects the hydrophobic precursors from aggregation and guide them through the mitochondrial intermembrane space. The TIMM8-TIMM13 complex mediates the import of some proteins while the predominant TIMM9-TIMM10 70 kDa complex mediates the import of much more proteins. The protein is Mitochondrial import inner membrane translocase subunit Tim8 A (timm8a) of Takifugu rubripes (Japanese pufferfish).